Consider the following 437-residue polypeptide: Immunoglobulin superfamily member 11 (437 aa).

The N-terminal stretch at 1 to 22 (MTCRGSPLAPLLLFSLHGVAAS) is a signal peptide. In terms of domain architecture, Ig-like V-type spans 23-136 (LEVSESPGSV…DRGGRNIGVT (114 aa)). Topologically, residues 23-241 (LEVSESPGSV…VISPQPRSIG (219 aa)) are extracellular. 2 cysteine pairs are disulfide-bonded: C44-C120 and C165-C215. An N-linked (GlcNAc...) asparagine glycan is attached at N102. In terms of domain architecture, Ig-like C2-type spans 144–234 (PSAPHCQIQG…TCLLDLQVIS (91 aa)). A helical membrane pass occupies residues 242 to 262 (LIAGAIGTGAVIIIFCIALIL). Residues 263-437 (GAFFYWRSKN…PAQSRAGSLV (175 aa)) lie on the Cytoplasmic side of the membrane. R379 carries the omega-N-methylarginine modification. Positions 382 to 405 (SLPAVSRSNGSVSRKARPPPVPSL) are disordered.

In terms of processing, N-glycosylated.

It is found in the cell membrane. In terms of biological role, functions as a cell adhesion molecule through homophilic interaction. Stimulates cell growth. This is Immunoglobulin superfamily member 11 (IGSF11) from Bos taurus (Bovine).